Consider the following 193-residue polypeptide: Probable nicotinate-nucleotide adenylyltransferase (193 aa).

Belongs to the NadD family.

It catalyses the reaction nicotinate beta-D-ribonucleotide + ATP + H(+) = deamido-NAD(+) + diphosphate. It functions in the pathway cofactor biosynthesis; NAD(+) biosynthesis; deamido-NAD(+) from nicotinate D-ribonucleotide: step 1/1. In terms of biological role, catalyzes the reversible adenylation of nicotinate mononucleotide (NaMN) to nicotinic acid adenine dinucleotide (NaAD). The sequence is that of Probable nicotinate-nucleotide adenylyltransferase from Coprothermobacter proteolyticus (strain ATCC 35245 / DSM 5265 / OCM 4 / BT).